The following is a 172-amino-acid chain: Methylated-DNA--protein-cysteine methyltransferase (172 aa).

Cys142 (nucleophile; methyl group acceptor) is an active-site residue.

The protein belongs to the MGMT family.

The protein resides in the cytoplasm. It carries out the reaction a 6-O-methyl-2'-deoxyguanosine in DNA + L-cysteinyl-[protein] = S-methyl-L-cysteinyl-[protein] + a 2'-deoxyguanosine in DNA. The catalysed reaction is a 4-O-methyl-thymidine in DNA + L-cysteinyl-[protein] = a thymidine in DNA + S-methyl-L-cysteinyl-[protein]. Its function is as follows. Involved in the cellular defense against the biological effects of O6-methylguanine (O6-MeG) and O4-methylthymine (O4-MeT) in DNA. Repairs the methylated nucleobase in DNA by stoichiometrically transferring the methyl group to a cysteine residue in the enzyme. This is a suicide reaction: the enzyme is irreversibly inactivated. The polypeptide is Methylated-DNA--protein-cysteine methyltransferase (Pyrococcus abyssi (strain GE5 / Orsay)).